The primary structure comprises 1224 residues: DNA-directed RNA polymerase subunit beta'' (1224 aa).

Zn(2+)-binding residues include cysteine 233, cysteine 308, cysteine 315, and cysteine 318.

It belongs to the RNA polymerase beta' chain family. RpoC2 subfamily. In plastids the minimal PEP RNA polymerase catalytic core is composed of four subunits: alpha, beta, beta', and beta''. When a (nuclear-encoded) sigma factor is associated with the core the holoenzyme is formed, which can initiate transcription. Zn(2+) serves as cofactor.

Its subcellular location is the plastid. It localises to the chloroplast. The enzyme catalyses RNA(n) + a ribonucleoside 5'-triphosphate = RNA(n+1) + diphosphate. DNA-dependent RNA polymerase catalyzes the transcription of DNA into RNA using the four ribonucleoside triphosphates as substrates. This chain is DNA-directed RNA polymerase subunit beta'', found in Pinus thunbergii (Japanese black pine).